The following is a 1409-amino-acid chain: MKALLDLFRQVQQEEQFDAIKIGLASPEKIRSWSFGEVKKPETINYRTFKPERDGLFCAKIFGPIKDYECLCGKYKRLKHRGVICEKCGVEVTLAKVRRERMGHIELAAPTAHIWFLKSLPSRLGMVLDMTLRDIERVLYFEAFVVVEPGMTPLKKSQIMSEDDYLAKCDEYGEGEFVALMGAEGIRELLRGIDIEKQIETIRAELQATGSEAKIKKFAKRLKVLEAFQRSGIKPDWMILEVLPVLPPELRPLVPLDGGRFATSDLNDLYRRVINRNNRLKRLLELKAPEIIVRNEKRMLQEAVDSLLDNGRRGKAMTGANKRPLKSLAEMIKGKGGRFRQNLLGKRVDYSGRSVIVVGPTLKLHQCGLPKLMALELFKPFIFHKLETMGIATTIKAAKKEVESQTPVVWDILEEVIREHPVMLNRAPTLHRLGIQAFEPVLIEGKAIQLHPLVCAAFNADFDGDQMAVHVPLSLEAQMEARTLMLASNNVLFPANGDPSIVPSQDVVLGLYYTTRDKINGRGEGMTFADISEVIRAYENKEVELASRVNVRITEYDLVNPEADGDARFAPKITLQATTVGRAILSEILPKGLPFSVLNKPLKKKEISRLINTAFRKCGLRETVIFADKLLQSGFRLATRAGISIAIDDMLVPPAKEKIISEAAAKVKEYDKQYMSGLVTDQERYNNVVDIWGAAGDQVGKAMMEQLQTEDVVDRHGKTVKQESFNSIYMMADSGARGSAAQIRQLAGMRGLMAKPDGSIIETPITANFREGLNVLQYFISTHGARKGLADTALKTANSGYLTRRLVDVTQDLVVVEDDCGTSNGVAMKALVEGGEVIEALRDRILGRVVVNDVVNPETQETAIEAGTLLDEDLVELIDSIGVDEVKVRTPLTCDTRYGLCAKCYGRDLGRGVLVNSGEAVGVIAAQSIGEPGTQLTMRTFHIGGAASRAAVASSVEAKATGTVRFTATMRYVTNAKGEQIVISRSGEALITDDHGRERERHKIPYGATLLVHDGQSIKAGTQLATWDPLTRPIISEYSGTIKFENVEEGVTVAKQMDEVTGLSTLVVIDAKRRTSASKGIRPQVKLLDSSGAEVKIPGTDHSVTIGFQVGALITVKDGQQVHVGEVLARIPTESQKTRDITGGLPRVAELFEARSPKDAAVLAEVTGTTSFGKDTKGKQRLVITDLDGNAHEFLIAKEKQVLVHDGQVVNKGEMIVEGPADPHDILRLKGVEELATYIVDEVQDVYRLQGVKINDKHIEVIVRQMLRRVQIVDVGDTKFIPGEQVERSELLDENDKVIAEGKRPATYENLLLGITKASLSTDSFISAASFQETTRVLTEAAIMGKVDDLRGLKENVIVGRLIPAGTGLAYHRARKAKEAADRDRAAAIAEEEAASIFETPAVQQEGDA.

4 residues coordinate Zn(2+): C70, C72, C85, and C88. Residues D461, D463, and D465 each coordinate Mg(2+). C820, C894, C901, and C904 together coordinate Zn(2+).

Belongs to the RNA polymerase beta' chain family. The RNAP catalytic core consists of 2 alpha, 1 beta, 1 beta' and 1 omega subunit. When a sigma factor is associated with the core the holoenzyme is formed, which can initiate transcription. It depends on Mg(2+) as a cofactor. The cofactor is Zn(2+).

It carries out the reaction RNA(n) + a ribonucleoside 5'-triphosphate = RNA(n+1) + diphosphate. In terms of biological role, DNA-dependent RNA polymerase catalyzes the transcription of DNA into RNA using the four ribonucleoside triphosphates as substrates. The protein is DNA-directed RNA polymerase subunit beta' of Ralstonia nicotianae (strain ATCC BAA-1114 / GMI1000) (Ralstonia solanacearum).